The following is a 355-amino-acid chain: Histidinol-phosphate aminotransferase 2 (355 aa).

Lys-213 bears the N6-(pyridoxal phosphate)lysine mark.

This sequence belongs to the class-II pyridoxal-phosphate-dependent aminotransferase family. Histidinol-phosphate aminotransferase subfamily. In terms of assembly, homodimer. Requires pyridoxal 5'-phosphate as cofactor.

It carries out the reaction L-histidinol phosphate + 2-oxoglutarate = 3-(imidazol-4-yl)-2-oxopropyl phosphate + L-glutamate. Its pathway is amino-acid biosynthesis; L-histidine biosynthesis; L-histidine from 5-phospho-alpha-D-ribose 1-diphosphate: step 7/9. This Burkholderia lata (strain ATCC 17760 / DSM 23089 / LMG 22485 / NCIMB 9086 / R18194 / 383) protein is Histidinol-phosphate aminotransferase 2.